The chain runs to 198 residues: ATP-dependent Clp protease proteolytic subunit (198 aa).

Residue serine 101 is the Nucleophile of the active site. The active site involves histidine 126.

This sequence belongs to the peptidase S14 family. Component of the chloroplastic Clp protease core complex.

The protein resides in the plastid. It localises to the chloroplast stroma. The catalysed reaction is Hydrolysis of proteins to small peptides in the presence of ATP and magnesium. alpha-casein is the usual test substrate. In the absence of ATP, only oligopeptides shorter than five residues are hydrolyzed (such as succinyl-Leu-Tyr-|-NHMec, and Leu-Tyr-Leu-|-Tyr-Trp, in which cleavage of the -Tyr-|-Leu- and -Tyr-|-Trp bonds also occurs).. Functionally, cleaves peptides in various proteins in a process that requires ATP hydrolysis. Has a chymotrypsin-like activity. Plays a major role in the degradation of misfolded proteins. The protein is ATP-dependent Clp protease proteolytic subunit of Psilotum nudum (Whisk fern).